A 1110-amino-acid chain; its full sequence is Nitric oxide synthase 3 (1110 aa).

Positions 1 to 74 are disordered; sequence MGNFKSVGQE…PPEGPKFPRV (74 aa). Gly residues predominate over residues 15–27; it reads CGLGLGLGLGLCG. Residues 31–40 show a composition bias toward low complexity; sequence PASPAPVSAS. Pro residues predominate over residues 47 to 69; sequence SSPPLPLPAPEHSPPLTRPPEGP. Zn(2+) is bound by residues cysteine 97 and cysteine 102. Positions 101–489 are interaction with NOSIP; that stretch reads RCLGSLVFPR…PDPWKGSGTK (389 aa). A (6R)-L-erythro-5,6,7,8-tetrahydrobiopterin-binding site is contributed by serine 105. Phosphoserine is present on serine 117. Cysteine 187 is a heme b binding site. L-arginine-binding residues include glutamine 250, tryptophan 359, tyrosine 360, and glutamate 364. Residue arginine 368 participates in (6R)-L-erythro-5,6,7,8-tetrahydrobiopterin binding. Asparagine 369 contributes to the L-arginine binding site. Alanine 449, tryptophan 450, and phenylalanine 463 together coordinate (6R)-L-erythro-5,6,7,8-tetrahydrobiopterin. Residue tyrosine 478 participates in heme b binding. At threonine 498 the chain carries Phosphothreonine. FMN contacts are provided by serine 529, glutamate 530, threonine 531, arginine 533, serine 575, and threonine 576. Phosphoserine is present on residues serine 618, serine 636, and serine 641. Residues serine 657, cysteine 664, glutamate 690, and glutamine 694 each coordinate FMN. Arginine 779 contacts NADP(+). Histidine 801 is an FAD binding site. A disordered region spans residues 821-848; it reads EDPPPPAESVAVEQLEKGSPGGPPPGWV. Serine 839 is modified (phosphoserine). 9 residues coordinate FAD: arginine 941, tyrosine 943, serine 944, threonine 959, alanine 961, tyrosine 965, valine 978, cysteine 979, and serine 980. NADP(+) is bound by residues threonine 1019, arginine 1052, serine 1081, arginine 1082, and lysine 1088.

It belongs to the NOS family. Homodimer. Interacts with NOSIP and NOSTRIN. Interacts with HSP90AB1. Forms a complex with ASL, ASS1 and SLC7A1; the complex regulates cell-autonomous L-arginine synthesis and citrulline recycling while channeling extracellular L-arginine to nitric oxide synthesis pathway. It depends on heme b as a cofactor. FAD serves as cofactor. The cofactor is FMN. (6R)-L-erythro-5,6,7,8-tetrahydrobiopterin is required as a cofactor.

It is found in the membrane. The protein localises to the caveola. Its subcellular location is the cytoplasm. It localises to the cytoskeleton. The protein resides in the golgi apparatus. It is found in the cell membrane. It catalyses the reaction 2 L-arginine + 3 NADPH + 4 O2 + H(+) = 2 L-citrulline + 2 nitric oxide + 3 NADP(+) + 4 H2O. Stimulated by calcium/calmodulin. Inhibited by NOSIP and NOSTRIN. Produces nitric oxide (NO) which is implicated in vascular smooth muscle relaxation through a cGMP-mediated signal transduction pathway. NO mediates vascular endothelial growth factor (VEGF)-induced angiogenesis in coronary vessels and promotes blood clotting through the activation of platelets. The chain is Nitric oxide synthase 3 (NOS3) from Cavia porcellus (Guinea pig).